Reading from the N-terminus, the 98-residue chain is Nucleoid-associated protein pc0477 (98 aa).

It belongs to the YbaB/EbfC family. As to quaternary structure, homodimer.

The protein resides in the cytoplasm. The protein localises to the nucleoid. Functionally, binds to DNA and alters its conformation. May be involved in regulation of gene expression, nucleoid organization and DNA protection. In Protochlamydia amoebophila (strain UWE25), this protein is Nucleoid-associated protein pc0477.